We begin with the raw amino-acid sequence, 322 residues long: MNYSALLDAISQGPLARWASILPEQIAEGLSEERYGDLPAWKTVLAQLPAITSSHTELAERVSIGAPGDCDETTREQLQSVLEALIPWRKGPYWIHGIHLDTEWRSDWKWDRVLPHLASLKDRLILDVGCGNGYHCWRMLGAGAKRVIGIDPSPRFVVQFHMIKQLAGLHYPVDVLPVGIEDLPEKLHAFDTVFSMGVFYHRRAPMDHLLELKNALRPGGQLVLETLVINGKEGDVLVPEGRYAMMNNVWFLPSCATLLSWLRKMGFKAPRVVDICPTTTEEQRSTHWMRFHSLPEFLHPENPALTAEGHPAPIRAVFVAEV.

Residues Lys90, Trp104, Lys109, Gly129, 151–153 (DPS), 180–181 (IE), Met196, Tyr200, and Arg315 contribute to the carboxy-S-adenosyl-L-methionine site.

This sequence belongs to the class I-like SAM-binding methyltransferase superfamily. CmoB family. As to quaternary structure, homotetramer.

The enzyme catalyses carboxy-S-adenosyl-L-methionine + 5-hydroxyuridine(34) in tRNA = 5-carboxymethoxyuridine(34) in tRNA + S-adenosyl-L-homocysteine + H(+). Functionally, catalyzes carboxymethyl transfer from carboxy-S-adenosyl-L-methionine (Cx-SAM) to 5-hydroxyuridine (ho5U) to form 5-carboxymethoxyuridine (cmo5U) at position 34 in tRNAs. In Cellvibrio japonicus (strain Ueda107) (Pseudomonas fluorescens subsp. cellulosa), this protein is tRNA U34 carboxymethyltransferase.